A 122-amino-acid polypeptide reads, in one-letter code: Large ribosomal subunit protein uL14 (122 aa).

It belongs to the universal ribosomal protein uL14 family. In terms of assembly, part of the 50S ribosomal subunit. Forms a cluster with proteins L3 and L19. In the 70S ribosome, L14 and L19 interact and together make contacts with the 16S rRNA in bridges B5 and B8.

Its function is as follows. Binds to 23S rRNA. Forms part of two intersubunit bridges in the 70S ribosome. The chain is Large ribosomal subunit protein uL14 from Leuconostoc mesenteroides subsp. mesenteroides (strain ATCC 8293 / DSM 20343 / BCRC 11652 / CCM 1803 / JCM 6124 / NCDO 523 / NBRC 100496 / NCIMB 8023 / NCTC 12954 / NRRL B-1118 / 37Y).